Consider the following 329-residue polypeptide: Cytosolic arginine sensor for mTORC1 subunit 2 (329 aa).

ACT domains lie at 72–139 (ADAT…MHTL) and 262–322 (ELWK…NALQ).

The protein belongs to the GATS family. As to quaternary structure, may form homodimers and heterodimers.

The protein localises to the cytoplasm. Its subcellular location is the cytosol. Its function is as follows. Functions as a negative regulator of the TORC1 signaling pathway. In Xenopus tropicalis (Western clawed frog), this protein is Cytosolic arginine sensor for mTORC1 subunit 2.